The chain runs to 388 residues: Formate-dependent phosphoribosylglycinamide formyltransferase (388 aa).

Residues 20 to 21 and Glu-80 each bind N(1)-(5-phospho-beta-D-ribosyl)glycinamide; that span reads EL. ATP contacts are provided by residues Arg-112, Lys-153, 158-163, 193-196, and Glu-201; these read SSGKGQ and EEFI. In terms of domain architecture, ATP-grasp spans 117 to 306; sequence RLAFEKLGLR…EFEIHARAIL (190 aa). Positions 265 and 277 each coordinate Mg(2+). N(1)-(5-phospho-beta-D-ribosyl)glycinamide contacts are provided by residues Asp-284, Lys-352, and 359–360; that span reads RR.

This sequence belongs to the PurK/PurT family. In terms of assembly, homodimer.

It catalyses the reaction N(1)-(5-phospho-beta-D-ribosyl)glycinamide + formate + ATP = N(2)-formyl-N(1)-(5-phospho-beta-D-ribosyl)glycinamide + ADP + phosphate + H(+). It functions in the pathway purine metabolism; IMP biosynthesis via de novo pathway; N(2)-formyl-N(1)-(5-phospho-D-ribosyl)glycinamide from N(1)-(5-phospho-D-ribosyl)glycinamide (formate route): step 1/1. In terms of biological role, involved in the de novo purine biosynthesis. Catalyzes the transfer of formate to 5-phospho-ribosyl-glycinamide (GAR), producing 5-phospho-ribosyl-N-formylglycinamide (FGAR). Formate is provided by PurU via hydrolysis of 10-formyl-tetrahydrofolate. This Methanococcus maripaludis (strain C7 / ATCC BAA-1331) protein is Formate-dependent phosphoribosylglycinamide formyltransferase.